A 54-amino-acid chain; its full sequence is Rubredoxin (54 aa).

One can recognise a Rubredoxin-like domain in the interval 1 to 54 (MKKYQCIVCGWIYDEAEGWPQDGIAPGTKWEDIPDDWTCPDCGVSKVDFEMIEV). Cys6, Cys9, Cys39, and Cys42 together coordinate Fe cation.

This sequence belongs to the rubredoxin family. It depends on Fe(3+) as a cofactor.

The protein resides in the cytoplasm. It functions in the pathway hydrocarbon metabolism; alkane degradation. Functionally, involved in the hydrocarbon hydroxylating system, which transfers electrons from NADH to rubredoxin reductase and then through rubredoxin to alkane 1 monooxygenase. The polypeptide is Rubredoxin (rubA) (Acinetobacter baylyi (strain ATCC 33305 / BD413 / ADP1)).